A 75-amino-acid chain; its full sequence is MKLLLFTALVLVVISLIEVEAENERACIPLEKECTKTPGNCCSGLRCDCYRRFEQGVAKGIQCWCIEKDVTYKGV.

Residues 1 to 21 form the signal peptide; the sequence is MKLLLFTALVLVVISLIEVEA. Positions 22 to 25 are excised as a propeptide; that stretch reads ENER.

The protein belongs to the neurotoxin 19 (CSTX) family. 06 (U6-Lctx) subfamily. Contains 4 disulfide bonds. As to expression, expressed by the venom gland.

It is found in the secreted. This is U6-lycotoxin-Ls1e from Lycosa singoriensis (Wolf spider).